Consider the following 437-residue polypeptide: Phosphomethylpyrimidine synthase (437 aa).

Substrate is bound by residues N69, M98, Y127, H163, 185-187 (SRG), 226-229 (DACR), and E265. Zn(2+) is bound at residue H269. Y292 serves as a coordination point for substrate. A Zn(2+)-binding site is contributed by H333. [4Fe-4S] cluster-binding residues include C409, C412, and C416.

The protein belongs to the ThiC family. Requires [4Fe-4S] cluster as cofactor.

The catalysed reaction is 5-amino-1-(5-phospho-beta-D-ribosyl)imidazole + S-adenosyl-L-methionine = 4-amino-2-methyl-5-(phosphooxymethyl)pyrimidine + CO + 5'-deoxyadenosine + formate + L-methionine + 3 H(+). The protein operates within cofactor biosynthesis; thiamine diphosphate biosynthesis. Its function is as follows. Catalyzes the synthesis of the hydroxymethylpyrimidine phosphate (HMP-P) moiety of thiamine from aminoimidazole ribotide (AIR) in a radical S-adenosyl-L-methionine (SAM)-dependent reaction. This is Phosphomethylpyrimidine synthase from Clostridium botulinum (strain Loch Maree / Type A3).